The following is a 126-amino-acid chain: Small ribosomal subunit protein uS8 (126 aa).

It belongs to the universal ribosomal protein uS8 family. Part of the 30S ribosomal subunit. Contacts proteins S5 and S12.

In terms of biological role, one of the primary rRNA binding proteins, it binds directly to 16S rRNA central domain where it helps coordinate assembly of the platform of the 30S subunit. The polypeptide is Small ribosomal subunit protein uS8 (Desulfovibrio desulfuricans (strain ATCC 27774 / DSM 6949 / MB)).